We begin with the raw amino-acid sequence, 58 residues long: Sperm protamine P1 (58 aa).

Residues 1-58 (MARYRRRSRSRSRSRYGRRRRRSRSRRRRSRRRRRRRGRRGRGYHRRSPHRRRRRRRR) are disordered.

Belongs to the protamine P1 family. As to expression, testis.

The protein resides in the nucleus. The protein localises to the chromosome. Functionally, protamines substitute for histones in the chromatin of sperm during the haploid phase of spermatogenesis. They compact sperm DNA into a highly condensed, stable and inactive complex. The sequence is that of Sperm protamine P1 (PRM1) from Monodelphis domestica (Gray short-tailed opossum).